A 454-amino-acid chain; its full sequence is UPF0210 protein Ppro_0613 (454 aa).

The protein belongs to the UPF0210 family. As to quaternary structure, homodimer.

The protein is UPF0210 protein Ppro_0613 of Pelobacter propionicus (strain DSM 2379 / NBRC 103807 / OttBd1).